A 492-amino-acid chain; its full sequence is Protein nucleotidyltransferase YdiU (492 aa).

ATP is bound by residues Gly-91, Gly-93, Arg-94, Lys-114, Asp-126, Gly-127, Arg-180, and Arg-187. Asp-256 serves as the catalytic Proton acceptor. 2 residues coordinate Mg(2+): Asn-257 and Asp-266. An ATP-binding site is contributed by Asp-266.

The protein belongs to the SELO family. It depends on Mg(2+) as a cofactor. Mn(2+) is required as a cofactor.

The enzyme catalyses L-seryl-[protein] + ATP = 3-O-(5'-adenylyl)-L-seryl-[protein] + diphosphate. It catalyses the reaction L-threonyl-[protein] + ATP = 3-O-(5'-adenylyl)-L-threonyl-[protein] + diphosphate. The catalysed reaction is L-tyrosyl-[protein] + ATP = O-(5'-adenylyl)-L-tyrosyl-[protein] + diphosphate. It carries out the reaction L-histidyl-[protein] + UTP = N(tele)-(5'-uridylyl)-L-histidyl-[protein] + diphosphate. The enzyme catalyses L-seryl-[protein] + UTP = O-(5'-uridylyl)-L-seryl-[protein] + diphosphate. It catalyses the reaction L-tyrosyl-[protein] + UTP = O-(5'-uridylyl)-L-tyrosyl-[protein] + diphosphate. Its function is as follows. Nucleotidyltransferase involved in the post-translational modification of proteins. It can catalyze the addition of adenosine monophosphate (AMP) or uridine monophosphate (UMP) to a protein, resulting in modifications known as AMPylation and UMPylation. This Synechococcus elongatus (strain ATCC 33912 / PCC 7942 / FACHB-805) (Anacystis nidulans R2) protein is Protein nucleotidyltransferase YdiU.